A 679-amino-acid chain; its full sequence is Methionine--tRNA ligase (679 aa).

A 'HIGH' region motif is present at residues 12–22 (PYANGPIHIGH). Zn(2+) is bound by residues Cys-143, Cys-146, Cys-156, and Cys-158. Residues 328 to 332 (KMSKS) carry the 'KMSKS' region motif. ATP is bound at residue Lys-331. The tract at residues 537 to 564 (MMEESKDEAAQETGAAATNPFNDSDQPL) is disordered. The tRNA-binding domain maps to 577-679 (DFMKVDLRVA…EGALPGQRVH (103 aa)).

It belongs to the class-I aminoacyl-tRNA synthetase family. MetG type 1 subfamily. As to quaternary structure, homodimer. Zn(2+) is required as a cofactor.

The protein resides in the cytoplasm. It carries out the reaction tRNA(Met) + L-methionine + ATP = L-methionyl-tRNA(Met) + AMP + diphosphate. Functionally, is required not only for elongation of protein synthesis but also for the initiation of all mRNA translation through initiator tRNA(fMet) aminoacylation. This Rhodopirellula baltica (strain DSM 10527 / NCIMB 13988 / SH1) protein is Methionine--tRNA ligase.